The following is a 243-amino-acid chain: Myrosinase MB2 (243 aa).

The N-linked (GlcNAc...) asparagine glycan is linked to Asn-30. Tyr-51 is a substrate binding site. The active-site Nucleophile is the Glu-125. Substrate-binding positions include Trp-173 and 180-181; that span reads EF. N-linked (GlcNAc...) asparagine glycosylation is present at Asn-216.

This sequence belongs to the glycosyl hydrolase 1 family. Homodimer. As to expression, in vacuoles called myrosin grains of a certain class of cells, myrosin cells, distributed in the cotyledons and the axis of the embryo as well as in different organs of the growing plant.

It localises to the vacuole. The catalysed reaction is a thioglucoside + H2O = a sugar + a thiol.. In terms of biological role, degradation of glucosinolates (glucose residue linked by a thioglucoside bound to an amino acid derivative) to glucose, sulfate and any of the products: thiocyanates, isothiocyanates, nitriles, epithionitriles or oxazolidine-2-thiones. The protein is Myrosinase MB2 of Sinapis alba (White mustard).